Here is a 778-residue protein sequence, read N- to C-terminus: Probable potassium transporter 13 (778 aa).

At 1–28 (MDVEGGGGGGGGAPPRGRNSWGWQKGTL) the chain is on the cytoplasmic side. Residues 29-49 (LLAYQSFGVVYGDLCISPVYV) traverse the membrane as a helical segment. Residues 50 to 72 (YKNTFSGKLRLHEEDEEILGVLS) lie on the Extracellular side of the membrane. The chain crosses the membrane as a helical span at residues 73-93 (LVFWSLTLIPLLKYIILVLGA). Over 94 to 156 (DDNGEGGTFA…AFFEKHYSLR (63 aa)) the chain is Cytoplasmic. The chain crosses the membrane as a helical span at residues 157–177 (VVLLLFVLMGTSMVIGDGVLT). Topologically, residues 178-199 (PTMSVLAAVSGLRIKFPELHEN) are extracellular. N199 carries an N-linked (GlcNAc...) asparagine glycan. The chain crosses the membrane as a helical span at residues 200-220 (YTVLLACVILIGLFALQHYGT). The Cytoplasmic portion of the chain corresponds to 221–222 (RR). A helical membrane pass occupies residues 223-243 (VGFLFAPILISWLTCIGGIGI). Topologically, residues 244 to 276 (YNIIKWNPSVIRALSPYYIYNFFRKAGKDGWSS) are extracellular. The helical transmembrane segment at 277–297 (LGGIVLCLTGAEAMFADLGHF) threads the bilayer. The Cytoplasmic portion of the chain corresponds to 298–303 (SKLSLR). A helical transmembrane segment spans residues 304–324 (LGFTIVVYPCLVLAYMGEAAY). Residues 325–343 (LSKHREDLQSSFYKALPDR) are Extracellular-facing. Residues 344-364 (VFWPVLFIATLATAVGSQAII) form a helical membrane-spanning segment. Residues 365-395 (SATFSIISQCRALGCFPRIKVVHTSSHVHGQ) are Cytoplasmic-facing. A helical membrane pass occupies residues 396 to 416 (IYIPEVNWVLMSLCLAVTIGF). Over 417–424 (RDTEMIGN) the chain is Extracellular. A helical transmembrane segment spans residues 425–445 (AYGLAVILVMCATTCLMFLVI). At 446 to 451 (TTVWNR) the chain is on the cytoplasmic side. A helical membrane pass occupies residues 452-472 (WVVWAAAFTVVFGSVELLYLS). Residues 473–477 (ACLAK) are Extracellular-facing. The helical transmembrane segment at 478–498 (VPHGGWLPLLLSLTTLLVMST) threads the bilayer. Topologically, residues 499–778 (WHYGTAMKQQ…LIEVGMAYRV (280 aa)) are cytoplasmic. Positions 655–677 (PATSSSGGSNQHAFDAGTTTSSC) are enriched in polar residues. Residues 655–704 (PATSSSGGSNQHAFDAGTTTSSCEIDATAGGGGRRKVRFDNDGGGGGEEE) form a disordered region.

Belongs to the HAK/KUP transporter (TC 2.A.72.3) family.

Its subcellular location is the membrane. High-affinity potassium transporter. This chain is Probable potassium transporter 13 (HAK13), found in Oryza sativa subsp. japonica (Rice).